Consider the following 308-residue polypeptide: Probable manganese-dependent inorganic pyrophosphatase (308 aa).

Residues H9, D13, D15, D75, H97, and D149 each coordinate Mn(2+).

Belongs to the PPase class C family. It depends on Mn(2+) as a cofactor.

It localises to the cytoplasm. It catalyses the reaction diphosphate + H2O = 2 phosphate + H(+). The protein is Probable manganese-dependent inorganic pyrophosphatase of Enterococcus faecalis (strain ATCC 700802 / V583).